Consider the following 93-residue polypeptide: Large ribosomal subunit protein bL31 (93 aa).

Residues 68–93 (GSADAAADEKKTDAKNNNKDNTSKED) are disordered. Positions 74 to 93 (ADEKKTDAKNNNKDNTSKED) are enriched in basic and acidic residues.

It belongs to the bacterial ribosomal protein bL31 family. Type A subfamily. Part of the 50S ribosomal subunit.

In terms of biological role, binds the 23S rRNA. This chain is Large ribosomal subunit protein bL31, found in Prochlorococcus marinus (strain MIT 9303).